The chain runs to 458 residues: Probable alpha-L-glutamate ligase (458 aa).

The segment at 1–162 (MSDNKFIIGS…YGVKSAKKSG (162 aa)) is unknown. The segment at 163-458 (LKIGLLASNP…IEKKLGWKAE (296 aa)) is alpha-L-glutamate ligase. Residues 267 to 450 (LQLLQKNNLD…IAGAMIDSIE (184 aa)) enclose the ATP-grasp domain. ATP-binding positions include Lys-304, 341-342 (EF), Asp-350, and 374-376 (RAN). Residues Asp-411, Glu-423, and Asn-425 each contribute to the Mg(2+) site. Residues Asp-411, Glu-423, and Asn-425 each coordinate Mn(2+).

It in the C-terminal section; belongs to the RimK family. Requires Mg(2+) as cofactor. Mn(2+) is required as a cofactor.

The polypeptide is Probable alpha-L-glutamate ligase (Shewanella halifaxensis (strain HAW-EB4)).